The primary structure comprises 598 residues: Phenylalanine--tRNA ligase beta subunit, cytoplasmic (598 aa).

In terms of domain architecture, B5 spans 303-383; the sequence is LAVYDMEVPL…IAYGFNNIPT (81 aa). Positions 361, 367, 370, and 371 each coordinate Mg(2+).

This sequence belongs to the phenylalanyl-tRNA synthetase beta subunit family. Type 2 subfamily. As to quaternary structure, tetramer of two alpha and two beta subunits. It depends on Mg(2+) as a cofactor.

The protein localises to the cytoplasm. Its subcellular location is the cytosol. It carries out the reaction tRNA(Phe) + L-phenylalanine + ATP = L-phenylalanyl-tRNA(Phe) + AMP + diphosphate + H(+). The chain is Phenylalanine--tRNA ligase beta subunit, cytoplasmic from Arabidopsis thaliana (Mouse-ear cress).